A 518-amino-acid polypeptide reads, in one-letter code: T-box transcription factor TBX5 (518 aa).

The segment at 1-46 is disordered; that stretch reads MADTDEGFGLARTPLEPDSKDRSCDSKPESALGAPSKSPSSPQAAF. Residues 15–28 are compositionally biased toward basic and acidic residues; the sequence is LEPDSKDRSCDSKP. The segment covering 34 to 45 has biased composition (low complexity); sequence APSKSPSSPQAA. The T-box DNA-binding region spans 58-238; it reads LHERELWLKF…NNPFAKGFRG (181 aa). 2 disordered regions span residues 254-307 and 330-352; these read EYPV…LLPP and ECSS…EEDT. Residues 269–301 are compositionally biased toward polar residues; that stretch reads SNHSPFSSETRALSTSSNLGSQYQCENGVSGPS. Residue Lys339 is modified to N6-acetyllysine.

In terms of assembly, monomer. Homodimer (via the T-box); binds DNA as homodimer. Interacts (via the T-box) with NKX2-5 (via the homeobox); this complex binds DNA. Interacts with GATA4. Interacts with KAT2A and KAT2B. Post-translationally, acetylation at Lys-339 by KAT2A and KAT2B promotes nuclear retention.

It is found in the nucleus. Its subcellular location is the cytoplasm. In terms of biological role, DNA-binding protein that regulates the transcription of several genes and is involved in heart development and limb pattern formation. Binds to the core DNA motif of NPPA promoter. The polypeptide is T-box transcription factor TBX5 (Tbx5) (Mus musculus (Mouse)).